The following is a 900-amino-acid chain: Probable 2-oxoadipate dehydrogenase complex component E1 homolog (900 aa).

The protein belongs to the alpha-ketoglutarate dehydrogenase family. Thiamine diphosphate is required as a cofactor.

It is found in the mitochondrion. It catalyses the reaction N(6)-[(R)-lipoyl]-L-lysyl-[protein] + 2-oxoadipate + H(+) = N(6)-[(R)-S(8)-glutaryldihydrolipoyl]-L-lysyl-[protein] + CO2. 2-oxoadipate dehydrogenase (E1a) component of the 2-oxoadipate dehydrogenase complex (OADHC). Participates in the first step, rate limiting for the overall conversion of 2-oxoadipate (alpha-ketoadipate) to glutaryl-CoA and CO(2) catalyzed by the whole OADHC. Catalyzes the irreversible decarboxylation of 2-oxoadipate via the thiamine diphosphate (ThDP) cofactor and subsequent transfer of the decarboxylated acyl intermediate on an oxidized dihydrolipoyl group that is covalently amidated to the E2 enzyme (dihydrolipoyllysine-residue succinyltransferase or DLST). This Dictyostelium discoideum (Social amoeba) protein is Probable 2-oxoadipate dehydrogenase complex component E1 homolog (odhA).